Reading from the N-terminus, the 561-residue chain is Urocanate hydratase (561 aa).

NAD(+) contacts are provided by residues 52–53, Gln-130, 176–178, Glu-196, Arg-201, 242–243, 263–267, 273–274, and Tyr-322; these read GG, GMG, NA, QTSAH, and YL. Cys-410 is an active-site residue. NAD(+) is bound at residue Gly-492.

It belongs to the urocanase family. NAD(+) serves as cofactor.

The protein resides in the cytoplasm. The catalysed reaction is 4-imidazolone-5-propanoate = trans-urocanate + H2O. The protein operates within amino-acid degradation; L-histidine degradation into L-glutamate; N-formimidoyl-L-glutamate from L-histidine: step 2/3. In terms of biological role, catalyzes the conversion of urocanate to 4-imidazolone-5-propionate. The sequence is that of Urocanate hydratase from Enterobacter sp. (strain 638).